The sequence spans 320 residues: MGLCKCPKRKVTNLFCFEHRVNVCEHCLVANHAKCIVQSYLQWLQDSDYNPNCRLCNTLLSSKETARLVCYDLFHWSCLNDLATQQPPNTAPAGYRCPSCQGPVFPPNNLVSPVAATLREKLSTVNWARAGLGLPLIEVAEPVDDTMSHDETDYRDWSVVNSSSDNLSETPETTSQTGYTYNSVAPGAVQQSLNGNMSQDHAVTIRDTGSESVPFNAASSPRKVYDTRENARGQDAVIDFDDDKYRRRPTLNWLARILRNRSGSKSRPASSMQRFLVILIIGVLGFLTLILLMSKLGRASADNDPNLDPLLNPHIHVGKE.

A B box-type; degenerate zinc finger spans residues 1–43 (MGLCKCPKRKVTNLFCFEHRVNVCEHCLVANHAKCIVQSYLQW). Residues 1 to 274 (MGLCKCPKRK…KSRPASSMQR (274 aa)) are Cytoplasmic-facing. The RING-type; degenerate zinc-finger motif lies at 53–101 (CRLCNTLLSSKETARLVCYDLFHWSCLNDLATQQPPNTAPAGYRCPSCQ). Residues 275–295 (FLVILIIGVLGFLTLILLMSK) traverse the membrane as a helical segment. At 296 to 320 (LGRASADNDPNLDPLLNPHIHVGKE) the chain is on the lumenal side.

The protein belongs to the ZFPL1 family.

The protein resides in the golgi apparatus. It localises to the cis-Golgi network membrane. Required for cis-Golgi integrity and efficient ER to Golgi transport. The protein is Zinc finger protein-like 1 (zfpl1) of Xenopus laevis (African clawed frog).